We begin with the raw amino-acid sequence, 463 residues long: Female germline-specific tumor suppressor gld-1 (463 aa).

Positions 1 to 10 are enriched in polar residues; it reads MPSCTTPTYG. The interval 1–76 is disordered; it reads MPSCTTPTYG…RAPPPARLTL (76 aa). The span at 11–31 shows a compositional bias: low complexity; it reads VSTQLESQSSESPSRSSVMTP. The segment at 135-205 is qua1 domain; involved in homodimerization; it reads PTATEPIEVE…PEPAGDMISI (71 aa). Residues 208–260 enclose the KH domain; sequence KIYVPKNEYPDYNFVGRILGPRGMTAKQLEQDTGCKIMVRGKGSMRDKSKESA. A qua2 domain; involved in RNA binding region spans residues 305–336; it reads APEGTDELKRKQLMELAIINGTYRPMKSPNPA. Positions 443–463 are disordered; that stretch reads NTNVSPSGASPSASSVNNTSF. The segment covering 447 to 457 has biased composition (low complexity); sequence SPSGASPSASS.

As to quaternary structure, homodimer. In terms of processing, phosphorylated by cdk-2 which may negatively regulate its expression in distal mitotic germline cells. Undergoes proteasomal degradation in proximal oocytes following mating. As to expression, expressed in proximal and distal oocytes in female worms but is eliminated from proximal oocytes following mating.

Its function is as follows. RNA-binding protein which recognizes the 5'-UACUCAU-3' RNA consensus sequence. Binds sequences in both the 5'coding and the 3'-UTR region of rme-2 mRNA. Binds sequences in the 3'-UTR region of cye-1 mRNA. Binds to cyb-2.1, cyb-2.2 and cyb-3 mRNA. Binds sequences in the 3'-UTR region of tra-2 mRNA. Binds to the 3' UTR of Notch receptor homolog glp-1, thereby repressing glp-1 translation in the embryo. Binding to the glp-1 3' UTR is inhibited by pos-1 binding to an overlapping binding site in the glp-1 3' UTR. Germ line-specific tumor suppressor essential for oogenesis. Controls the spatial pattern of translation of multiple oogenesis specific mRNAs (e.g. yolk receptor rme-2) by repression of translation during early meiotic prophase (leptotene to pachytene) and then derepression of translation during diplotene/ diakinesis, following its degradation. Also functions to promote the male sexual fate in the hermaphrodite germline but not the male germline. Represses translation of the vacuolar ATPase component vha-13 in the distal gonad. Functions redundantly with gld-2 to promote the initiation of meiotic development and/or inhibit stem cell proliferation. By regulating cye-1 expression, prevents entry into mitosis in meiotic germline cells. The protein is Female germline-specific tumor suppressor gld-1 (gld-1) of Caenorhabditis elegans.